Here is a 195-residue protein sequence, read N- to C-terminus: Interferon omega-1 (195 aa).

The N-terminal stretch at 1–23 (MAFSVSSLMALVVISSSPVSSMS) is a signal peptide. Disulfide bonds link cysteine 24–cysteine 122 and cysteine 52–cysteine 162. Asparagine 101 carries N-linked (GlcNAc...) asparagine glycosylation.

It belongs to the alpha/beta interferon family.

It localises to the secreted. The protein is Interferon omega-1 of Equus caballus (Horse).